Here is a 360-residue protein sequence, read N- to C-terminus: Phospho-N-acetylmuramoyl-pentapeptide-transferase (360 aa).

The next 10 helical transmembrane spans lie at 27 to 47, 70 to 90, 93 to 113, 134 to 154, 168 to 188, 205 to 225, 239 to 259, 262 to 282, 288 to 308, and 337 to 357; these read GALI…ISSL, GTPT…SILW, LSSV…AIGF, LALE…AGQE, LLLN…VGAG, VMVA…AIFA, LSVI…FNAP, AIFM…TVAV, IVLA…IIQV, and QVVI…LSTL.

This sequence belongs to the glycosyltransferase 4 family. MraY subfamily. Mg(2+) is required as a cofactor.

The protein localises to the cell inner membrane. It catalyses the reaction UDP-N-acetyl-alpha-D-muramoyl-L-alanyl-gamma-D-glutamyl-meso-2,6-diaminopimeloyl-D-alanyl-D-alanine + di-trans,octa-cis-undecaprenyl phosphate = di-trans,octa-cis-undecaprenyl diphospho-N-acetyl-alpha-D-muramoyl-L-alanyl-D-glutamyl-meso-2,6-diaminopimeloyl-D-alanyl-D-alanine + UMP. It participates in cell wall biogenesis; peptidoglycan biosynthesis. Functionally, catalyzes the initial step of the lipid cycle reactions in the biosynthesis of the cell wall peptidoglycan: transfers peptidoglycan precursor phospho-MurNAc-pentapeptide from UDP-MurNAc-pentapeptide onto the lipid carrier undecaprenyl phosphate, yielding undecaprenyl-pyrophosphoryl-MurNAc-pentapeptide, known as lipid I. The protein is Phospho-N-acetylmuramoyl-pentapeptide-transferase of Chelativorans sp. (strain BNC1).